A 188-amino-acid polypeptide reads, in one-letter code: Deoxycytidylate deaminase (188 aa).

Positions 1–171 (MKASTVLQIA…DILRNAGIEV (171 aa)) constitute a CMP/dCMP-type deaminase domain. Residues cysteine 19, cysteine 49, histidine 94, glutamate 102, and histidine 104 each contribute to the Zn(2+) site. The Proton donor role is filled by glutamate 106. Zn(2+) contacts are provided by cysteine 132 and cysteine 135.

This sequence belongs to the cytidine and deoxycytidylate deaminase family. In terms of assembly, homohexamer. Zn(2+) is required as a cofactor.

The catalysed reaction is dCMP + H2O + H(+) = dUMP + NH4(+). Its activity is regulated as follows. Allosteric enzyme whose activity is greatly influenced by the end products of its metabolic pathway, dCTP and dTTP. Supplies the nucleotide substrate for thymidylate synthetase. The sequence is that of Deoxycytidylate deaminase (CD) from Enterobacteria phage T2 (Bacteriophage T2).